The chain runs to 497 residues: WASH complex subunit homolog 1 (497 aa).

The disordered stretch occupies residues 306 to 497; that stretch reads EASEPTEAEA…PPNFDDEEWD (192 aa). Residues 323-339 show a composition bias toward pro residues; it reads LPPPPPPMKLDPSPQPA. Residues 341–350 show a composition bias toward low complexity; the sequence is TPVEITEIPP. Pro residues predominate over residues 351–372; it reads IISPPAPPPPPPPPPPPPPPQT. In terms of domain architecture, WH2 spans 390 to 412; the sequence is GRSDLMAAIRAAGGAGNAKLSRI.

It belongs to the WASH1 family. In terms of assembly, component of the WASH core complex. Component of the DHIC (ddl-1-containing hsf-1 inhibitory) complex, which contains at least ddl-1, ddl-2, hsb-1 and hsf-1. Within the complex, interacts with ddl-1. Formation of the DHIC may be dependent upon the Insulin/IGF-1-like signaling (IIS) mediated pathway. In terms of tissue distribution, expressed in several neurons located throughout the body.

Functionally, acts as a component of the WASH core complex that functions as a nucleation-promoting factor (NPF) at the surface of endosomes, where it recruits and activates the Arp2/3 complex to induce actin polymerization, playing a key role in the fission of tubules that serve as transport intermediates during endosome sorting. Acts as a component of the DHIC (ddl-1-containing hsf-1 inhibitory complex) which modulates lifespan by sequestering the heat shock transcription factor hsf-1 to negatively regulate its binding to DNA and its transcriptional activity. The sequence is that of WASH complex subunit homolog 1 from Caenorhabditis elegans.